Consider the following 422-residue polypeptide: MRSVLSFALLAANVVSAAVLAPFDYSGYKVVRVPTQKGNVKEVQRIITDLNLDTWKYPKAEGQNADIVIPPSQIPSFMERISGMDREIMHEDLGMSISNETTFEAYSAGYAPDINWFKSYHSYQDHLSYLQDLQGLFRTRSEYVDAGKSHEGRTIPALHLWGKGGKNSKPAIIFHGTIHAREWITTMVTEYMAWSFLSEYNKNADITSIVDNFDIWIFPIVNPDGFAYTQTSNRLWRKNRQPNPGARCPGRDLNRNYPYQWVGPGSSSNPCSDIYRGAEAGDGTEIKVHIANMKKIAAYKGIAMFVDWHSYGQLFMSPYGYSCTARPPTDARHQELSRIFAQALKAVHGTPYKTGPICSTIYQVNGDSVDWALEVLKVKLSLTAELRDTGARGFVLPADQILPSGEETLAGTVAMLKAVIKG.

A signal peptide spans 1-17 (MRSVLSFALLAANVVSA). Residues 18–112 (AVLAPFDYSG…FEAYSAGYAP (95 aa)) constitute a propeptide, activation peptide. Positions 119-419 (SYHSYQDHLS…AGTVAMLKAV (301 aa)) constitute a Peptidase M14 domain. Residues H179 and E182 each coordinate Zn(2+). Substrate-binding positions include 179–182 (HARE), R237, and 254–255 (NR). C248 and C271 are oxidised to a cystine. H309 contributes to the Zn(2+) binding site. 310-311 (SY) provides a ligand contact to substrate. E385 (proton donor/acceptor) is an active-site residue.

This sequence belongs to the peptidase M14 family. Zn(2+) is required as a cofactor.

It is found in the secreted. Functionally, extracellular metalloprotease that contributes to pathogenicity. This Arthroderma otae (strain ATCC MYA-4605 / CBS 113480) (Microsporum canis) protein is Metallocarboxypeptidase A (MCPA).